Consider the following 357-residue polypeptide: Meiotic driver wtf9 (357 aa).

The segment at 1 to 39 is disordered; the sequence is MKNKYYPLRSSMDEMSAKNDNEIDLEKGPLPEYNSEDGS. Over residues 11–29 the composition is skewed to basic and acidic residues; that stretch reads SMDEMSAKNDNEIDLEKGP. 7 helical membrane passes run 89–109, 119–139, 149–169, 198–218, 232–252, 256–276, and 286–306; these read LLISVLAVIVVFFTAWVCVNP, AFFVTIGITCPILLITIFCFF, CIKVTVIFLAQCVKVTVISLA, VVIIWLLWVVICYTLFLRSKF, CSISAALLLFLLYVRLPFWTL, FSGLFQVLGVQSCVVIVTKGL, and ATGYEIEASSLFVIGNFLFFY.

This sequence belongs to the WTF family. Homomer. Forms protein aggregates. The two isoforms can interact with each other and with themselves. High sequence similarity is required for their interaction.

The protein localises to the spore membrane. It is found in the vacuole membrane. The protein resides in the ascus epiplasm. Its subcellular location is the cytoplasm. It localises to the endoplasmic reticulum membrane. In terms of biological role, promotes unequal transmission of alleles from the parental zygote to progeny spores by acting as poison/antidote system where the poison and antidote proteins are produced from the same locus; the poison component is trans-acting and targets all spores within an ascus whereas the antidote component is spore-specific, leading to poisoning of all progeny that do not inherit the allele. Functionally, localizes isoform 2 to the vacuole thereby facilitating its degradation. Forms toxic aggregates that disrupt spore maturation. The polypeptide is Meiotic driver wtf9 (Schizosaccharomyces kambucha (Fission yeast)).